The sequence spans 194 residues: FMN-dependent NADH:quinone oxidoreductase 1 (194 aa).

FMN-binding positions include serine 9 and 85–88 (MYNF).

It belongs to the azoreductase type 1 family. In terms of assembly, homodimer. The cofactor is FMN.

The catalysed reaction is 2 a quinone + NADH + H(+) = 2 a 1,4-benzosemiquinone + NAD(+). It catalyses the reaction N,N-dimethyl-1,4-phenylenediamine + anthranilate + 2 NAD(+) = 2-(4-dimethylaminophenyl)diazenylbenzoate + 2 NADH + 2 H(+). Functionally, quinone reductase that provides resistance to thiol-specific stress caused by electrophilic quinones. Its function is as follows. Also exhibits azoreductase activity. Catalyzes the reductive cleavage of the azo bond in aromatic azo compounds to the corresponding amines. The chain is FMN-dependent NADH:quinone oxidoreductase 1 from Xanthomonas euvesicatoria pv. vesicatoria (strain 85-10) (Xanthomonas campestris pv. vesicatoria).